The following is a 381-amino-acid chain: MAQDFTVTPWEVKGKVDYDKLIVQFGTQKMTSELKERAKRAINDELHVMLRRDVFFSHRDFDLILNDYEKGNGFFLYTGRAPSLGMHIGHLIPFIFTKWLQEKFKVNVYIEITDDEKFLRNVDYTLDQTKEWSYENILDIIAVGFDPNKTFIFQDTEYIKNMYPLSVKIAKKLTFNEVRATFGLDTSSNIGIIFYPALQIVPTMFEKRRCLIPAGIDQDPYWRLQRDIAESLGYFKAAQIHSKFLPPLTGPEGKMSSSQPETAIYLTDDPKTVERKIMKYAFSGGQATVELHRKYGGNPDIDVAFQWLYMFFEPDDQRIRKIEEDYRSGAMLTGELKQILVDKLNAFLEEHREKREKAKDLVNVFKFDGDLARDMWKRIHV.

Residues 82-90 carry the 'HIGH' region motif; it reads PSLGMHIGH. The 'KMSKS' region signature appears at 254-258; that stretch reads KMSSS.

It belongs to the class-I aminoacyl-tRNA synthetase family.

It localises to the cytoplasm. It catalyses the reaction tRNA(Trp) + L-tryptophan + ATP = L-tryptophyl-tRNA(Trp) + AMP + diphosphate + H(+). The sequence is that of Tryptophan--tRNA ligase from Sulfolobus acidocaldarius (strain ATCC 33909 / DSM 639 / JCM 8929 / NBRC 15157 / NCIMB 11770).